We begin with the raw amino-acid sequence, 501 residues long: Histidine--tRNA ligase (501 aa).

This sequence belongs to the class-II aminoacyl-tRNA synthetase family. Homodimer.

The protein resides in the cytoplasm. The enzyme catalyses tRNA(His) + L-histidine + ATP = L-histidyl-tRNA(His) + AMP + diphosphate + H(+). In Methylocella silvestris (strain DSM 15510 / CIP 108128 / LMG 27833 / NCIMB 13906 / BL2), this protein is Histidine--tRNA ligase.